The chain runs to 277 residues: Putative phosphoenolpyruvate synthase regulatory protein (277 aa).

152 to 159 lines the ADP pocket; sequence GVSRCGKT.

Belongs to the pyruvate, phosphate/water dikinase regulatory protein family. PSRP subfamily.

The enzyme catalyses [pyruvate, water dikinase] + ADP = [pyruvate, water dikinase]-phosphate + AMP + H(+). It catalyses the reaction [pyruvate, water dikinase]-phosphate + phosphate + H(+) = [pyruvate, water dikinase] + diphosphate. In terms of biological role, bifunctional serine/threonine kinase and phosphorylase involved in the regulation of the phosphoenolpyruvate synthase (PEPS) by catalyzing its phosphorylation/dephosphorylation. The protein is Putative phosphoenolpyruvate synthase regulatory protein of Chromohalobacter salexigens (strain ATCC BAA-138 / DSM 3043 / CIP 106854 / NCIMB 13768 / 1H11).